The primary structure comprises 108 residues: Holo-[acyl-carrier-protein] synthase (108 aa).

The Mg(2+) site is built by Asp9 and Glu52.

The protein belongs to the P-Pant transferase superfamily. AcpS family. Requires Mg(2+) as cofactor.

The protein localises to the cytoplasm. The enzyme catalyses apo-[ACP] + CoA = holo-[ACP] + adenosine 3',5'-bisphosphate + H(+). Transfers the 4'-phosphopantetheine moiety from coenzyme A to a Ser of acyl-carrier-protein. This Coprothermobacter proteolyticus (strain ATCC 35245 / DSM 5265 / OCM 4 / BT) protein is Holo-[acyl-carrier-protein] synthase.